The sequence spans 179 residues: Adenine phosphoribosyltransferase (179 aa).

The protein belongs to the purine/pyrimidine phosphoribosyltransferase family. As to quaternary structure, homodimer.

The protein resides in the cytoplasm. It catalyses the reaction AMP + diphosphate = 5-phospho-alpha-D-ribose 1-diphosphate + adenine. It participates in purine metabolism; AMP biosynthesis via salvage pathway; AMP from adenine: step 1/1. Catalyzes a salvage reaction resulting in the formation of AMP, that is energically less costly than de novo synthesis. This chain is Adenine phosphoribosyltransferase, found in Haemophilus ducreyi (strain 35000HP / ATCC 700724).